A 125-amino-acid polypeptide reads, in one-letter code: Small ribosomal subunit protein uS11m (125 aa).

The protein belongs to the universal ribosomal protein uS11 family.

The protein resides in the mitochondrion. This chain is Small ribosomal subunit protein uS11m (RPS11), found in Marchantia polymorpha (Common liverwort).